Consider the following 308-residue polypeptide: GTP-binding protein RAD (308 aa).

Gly residues predominate over residues 1–15 (MTLNGGSGASGSRGA). The disordered stretch occupies residues 1–86 (MTLNGGSGAS…SDSLSSGGSG (86 aa)). Position 24 is an omega-N-methylarginine (arginine 24). Serine 26 carries the post-translational modification Phosphoserine. Positions 57–82 (ATTAAGTRTQGQRLDWPEGSSDSLSS) are enriched in low complexity. GTP-binding positions include 98-105 (GAPGVGKS) and 203-206 (NKSD). A calmodulin-binding region spans residues 278-297 (AKRFLGRIVARNSRKMAFRA).

It belongs to the small GTPase superfamily. RGK family. Interacts with Calmodulin preferentially in the inactive, GDP-bound form. Interacts with CAMK2D. Interacts with CACNB2; interaction may be involved in beta-adrenergic regulation of heart rate and contractile force. Interaction with CACNB2 regulates the trafficking of CACNA1C to the cell membrane. In terms of processing, phosphorylation at Ser-26, Ser-39, Ser-273 and Ser-301 may be involved in regulating inhibition of voltage-gated L-type Ca(2+) channels.

The protein localises to the cell membrane. Its function is as follows. May regulate basal voltage-dependent L-type Ca(2+) currents and be required for beta-adrenergic augmentation of Ca(2+) influx in cardiomyocytes, thereby regulating increases in heart rate and contractile force. May play an important role in cardiac antiarrhythmia via the strong suppression of voltage-dependent L-type Ca(2+) currents. Regulates voltage-gated L-type calcium channel subunit alpha-1C trafficking to the cell membrane. Inhibits cardiac hypertrophy through the calmodulin-dependent kinase II (CaMKII) pathway. Inhibits phosphorylation and activation of CAMK2D. The chain is GTP-binding protein RAD (Rrad) from Mus musculus (Mouse).